Here is a 256-residue protein sequence, read N- to C-terminus: 1-(5-phosphoribosyl)-5-[(5-phosphoribosylamino)methylideneamino] imidazole-4-carboxamide isomerase (256 aa).

The Proton acceptor role is filled by aspartate 8. Residue aspartate 129 is the Proton donor of the active site.

The protein belongs to the HisA/HisF family.

Its subcellular location is the cytoplasm. The catalysed reaction is 1-(5-phospho-beta-D-ribosyl)-5-[(5-phospho-beta-D-ribosylamino)methylideneamino]imidazole-4-carboxamide = 5-[(5-phospho-1-deoxy-D-ribulos-1-ylimino)methylamino]-1-(5-phospho-beta-D-ribosyl)imidazole-4-carboxamide. It participates in amino-acid biosynthesis; L-histidine biosynthesis; L-histidine from 5-phospho-alpha-D-ribose 1-diphosphate: step 4/9. The chain is 1-(5-phosphoribosyl)-5-[(5-phosphoribosylamino)methylideneamino] imidazole-4-carboxamide isomerase from Syntrophobacter fumaroxidans (strain DSM 10017 / MPOB).